A 618-amino-acid chain; its full sequence is MINTLDRYKDVYDIKNMSLDELNLLSRELRNFIIESVSQNGGHLASNLGVVELTLSLYNVFDFSYDKLIWDVGHQCYVHKILTGRRSGFQNLRKINGLSGFPKRCESKFDHFETGHSSTSISSALGMARARDLKGENYNVVAVIGDGALTGGMALEALNDVGDNKTKLTIILNDNQMSIGKNVGGLSTYLSSLRIDPNYNKFKRDVEGIIKKIPNIGKGVAKNLERVKDGVKQVLVPGMLFENMGIKYFGPIDGHNIKQLSKVMDKAKNMKEPVIIHVVTTKGKGYKFAEQNPDKFHGIGSFDYMTGCSKKSKGVTYSKAFGKAMVSIASKDKRVVAITAAMKDGTGLNEFSNKFKNRIFDVGIAEQHAVTMAAGMATAGLRPVFSVYSTFLQRAYDQVLHDVCIQNLPVVFAIDRAGLVGEDGETHQGVFDMSYLSHMPNMTIMAPKCVEELEFMLNWALSQESPIAIRYPKGESRLNLKPIKNFQKGKWEVLEDKGKISIIATGRMVEKAFNVKETLKERNIDIGLINATFVKPIDKEMLNKIIDEEKTIITLEDNVILGGFGNSVLNYVRDTNSNIKVVNLGFKDEFIPHGKVDDLFKMYGLDEEAILKEVMKLM.

Thiamine diphosphate is bound by residues His74 and 115 to 117 (GHS). Asp146 lines the Mg(2+) pocket. Residues 147-148 (GA), Asn175, Tyr286, and Glu366 each bind thiamine diphosphate. Asn175 provides a ligand contact to Mg(2+).

The protein belongs to the transketolase family. DXPS subfamily. As to quaternary structure, homodimer. It depends on Mg(2+) as a cofactor. Requires thiamine diphosphate as cofactor.

The enzyme catalyses D-glyceraldehyde 3-phosphate + pyruvate + H(+) = 1-deoxy-D-xylulose 5-phosphate + CO2. It functions in the pathway metabolic intermediate biosynthesis; 1-deoxy-D-xylulose 5-phosphate biosynthesis; 1-deoxy-D-xylulose 5-phosphate from D-glyceraldehyde 3-phosphate and pyruvate: step 1/1. In terms of biological role, catalyzes the acyloin condensation reaction between C atoms 2 and 3 of pyruvate and glyceraldehyde 3-phosphate to yield 1-deoxy-D-xylulose-5-phosphate (DXP). In Clostridium tetani (strain Massachusetts / E88), this protein is 1-deoxy-D-xylulose-5-phosphate synthase.